The sequence spans 126 residues: Small ribosomal subunit protein uS11 (126 aa).

This sequence belongs to the universal ribosomal protein uS11 family. As to quaternary structure, part of the 30S ribosomal subunit.

Located on the platform of the 30S subunit. This chain is Small ribosomal subunit protein uS11, found in Methanosarcina barkeri (strain Fusaro / DSM 804).